We begin with the raw amino-acid sequence, 104 residues long: DNA-directed RNA polymerase subunit omega (104 aa).

This sequence belongs to the RNA polymerase subunit omega family. The RNAP catalytic core consists of 2 alpha, 1 beta, 1 beta' and 1 omega subunit. When a sigma factor is associated with the core the holoenzyme is formed, which can initiate transcription.

It catalyses the reaction RNA(n) + a ribonucleoside 5'-triphosphate = RNA(n+1) + diphosphate. Promotes RNA polymerase assembly. Latches the N- and C-terminal regions of the beta' subunit thereby facilitating its interaction with the beta and alpha subunits. This chain is DNA-directed RNA polymerase subunit omega, found in Streptococcus suis (strain 05ZYH33).